Reading from the N-terminus, the 104-residue chain is Large ribosomal subunit protein cL38 (104 aa).

The transit peptide at 1-39 (MASVSSIFGCGVSMAPNSSLRNKAIRTERRSACGGLLIE) directs the protein to the chloroplast. The disordered stretch occupies residues 42-76 (SRPQKKSTAHHMKTRPRKSRLSDRNRKPTVYAPLP). Positions 44 to 60 (PQKKSTAHHMKTRPRKS) are enriched in basic residues.

The protein belongs to the chloroplast-specific ribosomal protein cL38 family. Part of the 50S ribosomal subunit.

The protein localises to the plastid. The protein resides in the chloroplast. The protein is Large ribosomal subunit protein cL38 (PSRP6) of Pisum sativum (Garden pea).